Consider the following 293-residue polypeptide: Histamine N-methyltransferase B (293 aa).

E28 contacts substrate. G60, E89, Q94, S120, and I142 together coordinate S-adenosyl-L-methionine. Substrate is bound at residue N283.

It belongs to the class I-like SAM-binding methyltransferase superfamily. HNMT family. As to quaternary structure, monomer.

The protein localises to the cytoplasm. The catalysed reaction is histamine + S-adenosyl-L-methionine = N(tau)-methylhistamine + S-adenosyl-L-homocysteine + H(+). Its function is as follows. Inactivates histamine by N-methylation. Plays an important role in degrading histamine and in regulating the airway response to histamine. This Xenopus laevis (African clawed frog) protein is Histamine N-methyltransferase B (hnmt-b).